The primary structure comprises 230 residues: Large ribosomal subunit protein uL1 (230 aa).

Belongs to the universal ribosomal protein uL1 family. In terms of assembly, part of the 50S ribosomal subunit.

In terms of biological role, binds directly to 23S rRNA. The L1 stalk is quite mobile in the ribosome, and is involved in E site tRNA release. Protein L1 is also a translational repressor protein, it controls the translation of the L11 operon by binding to its mRNA. In Metamycoplasma arthritidis (strain 158L3-1) (Mycoplasma arthritidis), this protein is Large ribosomal subunit protein uL1.